A 364-amino-acid polypeptide reads, in one-letter code: Chorismate synthase (364 aa).

The NADP(+) site is built by Arg48 and Arg54. Residues 125-127, 238-239, Gly278, 293-297, and Arg319 contribute to the FMN site; these read RSS, NA, and KPTSS.

It belongs to the chorismate synthase family. As to quaternary structure, homotetramer. Requires FMNH2 as cofactor.

The enzyme catalyses 5-O-(1-carboxyvinyl)-3-phosphoshikimate = chorismate + phosphate. The protein operates within metabolic intermediate biosynthesis; chorismate biosynthesis; chorismate from D-erythrose 4-phosphate and phosphoenolpyruvate: step 7/7. In terms of biological role, catalyzes the anti-1,4-elimination of the C-3 phosphate and the C-6 proR hydrogen from 5-enolpyruvylshikimate-3-phosphate (EPSP) to yield chorismate, which is the branch point compound that serves as the starting substrate for the three terminal pathways of aromatic amino acid biosynthesis. This reaction introduces a second double bond into the aromatic ring system. The chain is Chorismate synthase from Shewanella loihica (strain ATCC BAA-1088 / PV-4).